The following is a 372-amino-acid chain: F-box protein AFR (372 aa).

Residues 1–15 (MAEQETTSNINTIND) show a composition bias toward polar residues. The interval 1-27 (MAEQETTSNINTINDQAEEETRTKSQP) is disordered. Residues 29 to 74 (ISGLPNDIAELCLLRLPYPYHALYRSVSSSWNKTITNPRFLFSKQS) form the F-box domain. 5 Kelch repeats span residues 80–126 (PYLF…HALS), 135–178 (KLFV…NVNG), 179–227 (KIMA…VIGK), 229–276 (MCVT…IRDR), and 279–325 (VISE…DRVF).

As to quaternary structure, part of a SCF (ASK-cullin-F-box) protein ligase complex. Interacts with SKP1A.

It participates in protein modification; protein ubiquitination. Component of SCF (ASK-cullin-F-box) E3 ubiquitin ligase complexes, which may mediate the ubiquitination and subsequent proteasomal degradation of target proteins. Part of the phyA-mediated signaling transduction pathway leading to the regulation of gene expression and hypocotyls elongation in response to red and far-red light exposure. This is F-box protein AFR (AFR) from Arabidopsis thaliana (Mouse-ear cress).